We begin with the raw amino-acid sequence, 295 residues long: Malonyl-[acyl-carrier protein] O-methyltransferase (295 aa).

The protein belongs to the methyltransferase superfamily.

It carries out the reaction malonyl-[ACP] + S-adenosyl-L-methionine = malonyl-[ACP] methyl ester + S-adenosyl-L-homocysteine. Its pathway is cofactor biosynthesis; biotin biosynthesis. Functionally, converts the free carboxyl group of a malonyl-thioester to its methyl ester by transfer of a methyl group from S-adenosyl-L-methionine (SAM). It allows to synthesize pimeloyl-ACP via the fatty acid synthetic pathway. This is Malonyl-[acyl-carrier protein] O-methyltransferase from Xylella fastidiosa (strain M23).